Consider the following 61-residue polypeptide: MRECISIHIGQAGIQVGNACWELYCLEHGIQADGQMPGDKTIGGGDAEFDEGEDGDEGDEY.

Glutamine 11 contacts GTP. The tract at residues 35-61 (QMPGDKTIGGGDAEFDEGEDGDEGDEY) is disordered. The residue at position 40 (lysine 40) is an N6-acetyllysine. Positions 47-61 (AEFDEGEDGDEGDEY) are enriched in acidic residues.

It belongs to the tubulin family. In terms of assembly, dimer of alpha and beta chains. A typical microtubule is a hollow water-filled tube with an outer diameter of 25 nm and an inner diameter of 15 nM. Alpha-beta heterodimers associate head-to-tail to form protofilaments running lengthwise along the microtubule wall with the beta-tubulin subunit facing the microtubule plus end conferring a structural polarity. Microtubules usually have 13 protofilaments but different protofilament numbers can be found in some organisms and specialized cells. Mg(2+) serves as cofactor. Post-translationally, undergoes a tyrosination/detyrosination cycle, the cyclic removal and re-addition of a C-terminal tyrosine residue by the enzymes tubulin tyrosine carboxypeptidase (TTCP) and tubulin tyrosine ligase (TTL), respectively. Acetylation of alpha chains at Lys-40 stabilizes microtubules and affects affinity and processivity of microtubule motors. This modification has a role in multiple cellular functions, ranging from cell motility, cell cycle progression or cell differentiation to intracellular trafficking and signaling.

It is found in the cytoplasm. The protein localises to the cytoskeleton. It carries out the reaction GTP + H2O = GDP + phosphate + H(+). Functionally, tubulin is the major constituent of microtubules, a cylinder consisting of laterally associated linear protofilaments composed of alpha- and beta-tubulin heterodimers. Microtubules grow by the addition of GTP-tubulin dimers to the microtubule end, where a stabilizing cap forms. Below the cap, tubulin dimers are in GDP-bound state, owing to GTPase activity of alpha-tubulin. This Zea mays (Maize) protein is Tubulin alpha-4 chain (TUBA4).